Reading from the N-terminus, the 308-residue chain is MKQCFVVTTTKRLDSLLASLLNLSRVKVVKLIMNGQIKVNEKLTFKNSLIVAKDDVIKVEIHDETTSDFITSVEPYNLKLEVLFEDKDLMVINKPSGLLTHPTTFNEKASLLAACIFHNNKNPVYLVHRLDRDTSGAIVVCKNQASLLNLQNQLQNRTLKRYYVALVHFPFNALTGSINAPLARVNNNKVMFKIAQTAKAKQAITKFKVINQNEKAALISLELLTGRTHQIRVHLKFIQHPVYNDPLYGIKSEKKDSYGQFLHANRICFIHPTLNKPMDFHAPLEPKFSTKLKSLNLSLTDPLHVLFK.

The region spanning 11–87 (KRLDSLLASL…LKLEVLFEDK (77 aa)) is the S4 RNA-binding domain. Asp-131 is a catalytic residue.

Belongs to the pseudouridine synthase RluA family.

It catalyses the reaction a uridine in RNA = a pseudouridine in RNA. This is an uncharacterized protein from Mycoplasma genitalium (strain ATCC 33530 / DSM 19775 / NCTC 10195 / G37) (Mycoplasmoides genitalium).